The primary structure comprises 272 residues: Imidazole glycerol phosphate synthase subunit HisF (272 aa).

Active-site residues include aspartate 11 and aspartate 130.

It belongs to the HisA/HisF family. As to quaternary structure, heterodimer of HisH and HisF.

The protein resides in the cytoplasm. It catalyses the reaction 5-[(5-phospho-1-deoxy-D-ribulos-1-ylimino)methylamino]-1-(5-phospho-beta-D-ribosyl)imidazole-4-carboxamide + L-glutamine = D-erythro-1-(imidazol-4-yl)glycerol 3-phosphate + 5-amino-1-(5-phospho-beta-D-ribosyl)imidazole-4-carboxamide + L-glutamate + H(+). Its pathway is amino-acid biosynthesis; L-histidine biosynthesis; L-histidine from 5-phospho-alpha-D-ribose 1-diphosphate: step 5/9. IGPS catalyzes the conversion of PRFAR and glutamine to IGP, AICAR and glutamate. The HisF subunit catalyzes the cyclization activity that produces IGP and AICAR from PRFAR using the ammonia provided by the HisH subunit. This Methanococcus maripaludis (strain C5 / ATCC BAA-1333) protein is Imidazole glycerol phosphate synthase subunit HisF.